A 76-amino-acid polypeptide reads, in one-letter code: Spermatid nuclear transition protein 3 (76 aa).

A compositionally biased stretch (polar residues) spans 1 to 11 (AKVTEKSWQPQ). Disordered regions lie at residues 1-34 (AKVT…GKVR) and 56-76 (VITT…ETIP). Residues 16–34 (KRWKKRKTPSQPRSRGKVR) show a composition bias toward basic residues.

It localises to the nucleus. The protein localises to the chromosome. In terms of biological role, involved in nuclear basic protein transition: histones are replaced by spermatid specific proteins which are themselves replaced by protamines in late spermatids. In Sus scrofa (Pig), this protein is Spermatid nuclear transition protein 3 (TNP3).